The sequence spans 280 residues: Keratin, type I cytoskeletal 47 kDa (280 aa).

The head stretch occupies residues M1–N81. The coil 1A stretch occupies residues D82–W117. The 199-residue stretch at D82–K280 folds into the IF rod domain. The linker 1 stretch occupies residues Y118–I139. The interval I140 to A231 is coil 1B. Positions K232 to I254 are linker 12. The interval L255–K280 is coil 2.

The protein belongs to the intermediate filament family. Heterotetramer of two type I and two type II keratins.

This Xenopus laevis (African clawed frog) protein is Keratin, type I cytoskeletal 47 kDa (xk81b1).